We begin with the raw amino-acid sequence, 174 residues long: 3-hydroxydecanoyl-[acyl-carrier-protein] dehydratase (174 aa).

Residue His73 is part of the active site.

Belongs to the thioester dehydratase family. FabA subfamily. As to quaternary structure, homodimer.

The protein localises to the cytoplasm. It catalyses the reaction a (3R)-hydroxyacyl-[ACP] = a (2E)-enoyl-[ACP] + H2O. The catalysed reaction is (3R)-hydroxydecanoyl-[ACP] = (2E)-decenoyl-[ACP] + H2O. The enzyme catalyses (2E)-decenoyl-[ACP] = (3Z)-decenoyl-[ACP]. It functions in the pathway lipid metabolism; fatty acid biosynthesis. Necessary for the introduction of cis unsaturation into fatty acids. Catalyzes the dehydration of (3R)-3-hydroxydecanoyl-ACP to E-(2)-decenoyl-ACP and then its isomerization to Z-(3)-decenoyl-ACP. Can catalyze the dehydratase reaction for beta-hydroxyacyl-ACPs with saturated chain lengths up to 16:0, being most active on intermediate chain length. In Cellvibrio japonicus (strain Ueda107) (Pseudomonas fluorescens subsp. cellulosa), this protein is 3-hydroxydecanoyl-[acyl-carrier-protein] dehydratase.